The chain runs to 257 residues: Major prion protein (257 aa).

The first 24 residues, Met-1 to Cys-24, serve as a signal peptide directing secretion. Residues Lys-25–Ala-234 form an interaction with GRB2, ERI3 and SYN1 region. Positions Arg-27 to Lys-114 are disordered. A run of 5 repeats spans residues Pro-54–Gln-62, Pro-63–Gln-70, Pro-71–Gln-78, Pro-79–Gln-86, and Pro-87–Gln-95. The interval Pro-54 to Gln-95 is 5 X 8 AA tandem repeats of P-H-G-G-G-W-G-Q. A compositionally biased stretch (gly residues) spans Gln-55 to Gly-101. Residues His-64, Gly-65, Gly-66, His-72, Gly-73, Gly-74, His-80, Gly-81, Gly-82, His-88, Gly-90, and Gly-91 each contribute to the Cu(2+) site. Cys-183 and Cys-218 form a disulfide bridge. N-linked (GlcNAc...) asparagine glycans are attached at residues Asn-185 and Asn-201. Ala-234 is lipidated: GPI-anchor amidated alanine. Residues Ser-235 to Gly-257 constitute a propeptide, removed in mature form.

This sequence belongs to the prion family. In terms of assembly, monomer and homodimer. Has a tendency to aggregate into amyloid fibrils containing a cross-beta spine, formed by a steric zipper of superposed beta-strands. Soluble oligomers may represent an intermediate stage on the path to fibril formation. Copper binding may promote oligomerization. Interacts with GRB2, APP, ERI3/PRNPIP and SYN1. Mislocalized cytosolically exposed PrP interacts with MGRN1; this interaction alters MGRN1 subcellular location and causes lysosomal enlargement. Interacts with KIAA1191.

The protein resides in the cell membrane. The protein localises to the golgi apparatus. Its function is as follows. Its primary physiological function is unclear. Has cytoprotective activity against internal or environmental stresses. May play a role in neuronal development and synaptic plasticity. May be required for neuronal myelin sheath maintenance. May play a role in iron uptake and iron homeostasis. Soluble oligomers are toxic to cultured neuroblastoma cells and induce apoptosis (in vitro). Association with GPC1 (via its heparan sulfate chains) targets PRNP to lipid rafts. Also provides Cu(2+) or Zn(2+) for the ascorbate-mediated GPC1 deaminase degradation of its heparan sulfate side chains. In Mustela putorius furo (European domestic ferret), this protein is Major prion protein (PRNP).